Here is a 207-residue protein sequence, read N- to C-terminus: Porin MspD (207 aa).

The first 24 residues, 1 to 24 (MRYLVMMFALLVSVTLVSPRPANA), serve as a signal peptide directing secretion.

Belongs to the mycobacterial porin (TC 1.B.24) family. As to quaternary structure, octamers. Probably forms a goblet with the wide end on the exterior of the outer membrane and a central channel. It is not known if mixed oligomers of MspD with other Msp subunits form in vivo.

It localises to the cell outer membrane. The protein resides in the secreted. The protein localises to the cell wall. Its function is as follows. A backup porin induced when MspA, the major porin, is deleted. It probably forms a water-filled channel which favors the permeation of cations. There are about 2400 porins in wild-type, 800 in an mspA deletion and 150 in a double mspA-mspC deletion. The polypeptide is Porin MspD (mspD) (Mycolicibacterium smegmatis (strain ATCC 700084 / mc(2)155) (Mycobacterium smegmatis)).